A 310-amino-acid chain; its full sequence is Olfactory receptor 5P80 (310 aa).

Topologically, residues 1–25 (MEPGNYTVVTEVILLGFTEDAIIRA) are extracellular. Asn5 is a glycosylation site (N-linked (GlcNAc...) asparagine). A helical membrane pass occupies residues 26–46 (ILFIVFLIIYSVTLMGNASII). Residues 47 to 54 (MLIRRSPQ) lie on the Cytoplasmic side of the membrane. A helical membrane pass occupies residues 55 to 75 (LHTPMYLLLSHLAFVDIGYSS). Residues 76-99 (SVTPIMLKGFLRKETFILVSGCVA) lie on the Extracellular side of the membrane. Residues Cys97 and Cys189 are joined by a disulfide bond. A helical transmembrane segment spans residues 100–120 (QLCSVVTFGSTECFLLAAMAY). The Cytoplasmic portion of the chain corresponds to 121-133 (DRYVAICSPLLYA). The chain crosses the membrane as a helical span at residues 134 to 154 (TQMSSTVCILLVGASYLGGCV). At 155–196 (NAWTFTGCLLNLSFCRPNKVNHFFCDYSPLLKISCSHDFSSE) the chain is on the extracellular side. N-linked (GlcNAc...) asparagine glycosylation occurs at Asn165. The helical transmembrane segment at 197-217 (VIPAISSGSIIVVTVFIIALS) threads the bilayer. Topologically, residues 218–237 (YVYILVSILKMRSTEGRQKA) are cytoplasmic. The helical transmembrane segment at 238–258 (FSTCTSHLTAVTLFYGTITFI) threads the bilayer. Topologically, residues 259–271 (YVMPKSSYSTDQN) are extracellular. Residues 272–292 (KVVSVFYTVVIPMLNPIIYSL) form a helical membrane-spanning segment. Residues 293–310 (RNKDVKEAMKKLMANTHH) are Cytoplasmic-facing.

It belongs to the G-protein coupled receptor 1 family.

It is found in the cell membrane. Potential odorant receptor. This is Olfactory receptor 5P80 from Mus musculus (Mouse).